Reading from the N-terminus, the 374-residue chain is Protein-glutamate methylesterase/protein-glutamine glutaminase 1 (374 aa).

The Response regulatory domain occupies 4–121; sequence KVLVVDDSSF…ATNKDEAILL (118 aa). Asp55 bears the 4-aspartylphosphate mark. The interval 141-170 is disordered; that stretch reads PSVAPVTPRPTTGSAVGNATTPVQSASAPV. Residues 149 to 167 show a composition bias toward polar residues; the sequence is RPTTGSAVGNATTPVQSAS. The 201-residue stretch at 174 to 374 folds into the CheB-type methylesterase domain; it reads PLSSIRASGK…ESILKESARG (201 aa). Catalysis depends on residues Ser193, His220, and Asp316.

The protein belongs to the CheB family. Phosphorylated by CheA. Phosphorylation of the N-terminal regulatory domain activates the methylesterase activity.

It is found in the cytoplasm. The enzyme catalyses [protein]-L-glutamate 5-O-methyl ester + H2O = L-glutamyl-[protein] + methanol + H(+). It carries out the reaction L-glutaminyl-[protein] + H2O = L-glutamyl-[protein] + NH4(+). In terms of biological role, involved in chemotaxis. Part of a chemotaxis signal transduction system that modulates chemotaxis in response to various stimuli. Catalyzes the demethylation of specific methylglutamate residues introduced into the chemoreceptors (methyl-accepting chemotaxis proteins or MCP) by CheR. Also mediates the irreversible deamidation of specific glutamine residues to glutamic acid. The sequence is that of Protein-glutamate methylesterase/protein-glutamine glutaminase 1 from Shewanella oneidensis (strain ATCC 700550 / JCM 31522 / CIP 106686 / LMG 19005 / NCIMB 14063 / MR-1).